The following is a 399-amino-acid chain: Cyclic dehypoxanthine futalosine synthase (399 aa).

The Radical SAM core domain maps to 56-288 (ATYIIERNIN…IAIARVFLDN (233 aa)). Residues cysteine 70, cysteine 74, and cysteine 77 each contribute to the [4Fe-4S] cluster site.

This sequence belongs to the radical SAM superfamily. MqnC family. Requires [4Fe-4S] cluster as cofactor.

The enzyme catalyses dehypoxanthine futalosine + S-adenosyl-L-methionine = cyclic dehypoxanthinylfutalosinate + 5'-deoxyadenosine + L-methionine + H(+). It participates in quinol/quinone metabolism; menaquinone biosynthesis. Functionally, radical SAM enzyme that catalyzes the cyclization of dehypoxanthine futalosine (DHFL) into cyclic dehypoxanthine futalosine (CDHFL), a step in the biosynthesis of menaquinone (MK, vitamin K2). The polypeptide is Cyclic dehypoxanthine futalosine synthase (Streptomyces coelicolor (strain ATCC BAA-471 / A3(2) / M145)).